The primary structure comprises 345 residues: Phosphoribosylformylglycinamidine cyclo-ligase (345 aa).

Belongs to the AIR synthase family.

The protein localises to the cytoplasm. The enzyme catalyses 2-formamido-N(1)-(5-O-phospho-beta-D-ribosyl)acetamidine + ATP = 5-amino-1-(5-phospho-beta-D-ribosyl)imidazole + ADP + phosphate + H(+). Its pathway is purine metabolism; IMP biosynthesis via de novo pathway; 5-amino-1-(5-phospho-D-ribosyl)imidazole from N(2)-formyl-N(1)-(5-phospho-D-ribosyl)glycinamide: step 2/2. The chain is Phosphoribosylformylglycinamidine cyclo-ligase from Shewanella denitrificans (strain OS217 / ATCC BAA-1090 / DSM 15013).